We begin with the raw amino-acid sequence, 65 residues long: Photosystem II reaction center protein J (65 aa).

Positions 1–17 (MSTKLKGPDGRIPDRLP) are enriched in basic and acidic residues. The segment at 1-21 (MSTKLKGPDGRIPDRLPDGSP) is disordered. A helical transmembrane segment spans residues 36-56 (LWLVATVGGMAVLSVLGLFFF).

It belongs to the PsbJ family. PSII is composed of 1 copy each of membrane proteins PsbA, PsbB, PsbC, PsbD, PsbE, PsbF, PsbH, PsbI, PsbJ, PsbK, PsbL, PsbM, PsbT, PsbX, PsbY, Psb30/Ycf12, peripheral proteins PsbO, CyanoQ (PsbQ), PsbU, PsbV and a large number of cofactors. It forms dimeric complexes.

It is found in the cellular thylakoid membrane. In terms of biological role, one of the components of the core complex of photosystem II (PSII). PSII is a light-driven water:plastoquinone oxidoreductase that uses light energy to abstract electrons from H(2)O, generating O(2) and a proton gradient subsequently used for ATP formation. It consists of a core antenna complex that captures photons, and an electron transfer chain that converts photonic excitation into a charge separation. The chain is Photosystem II reaction center protein J from Prochlorococcus marinus (strain MIT 9313).